A 349-amino-acid polypeptide reads, in one-letter code: Interferon regulatory factor 2 (349 aa).

Residues 5–113 constitute a DNA-binding region (IRF tryptophan pentad repeat); that stretch reads RMRMRPWLEE…NAFRVYRMLP (109 aa). K75 and K78 each carry N6-acetyllysine. A Glycyl lysine isopeptide (Lys-Gly) (interchain with G-Cter in SUMO); alternate cross-link involves residue K137. K137 participates in a covalent cross-link: Glycyl lysine isopeptide (Lys-Gly) (interchain with G-Cter in SUMO2); alternate. Residue K166 forms a Glycyl lysine isopeptide (Lys-Gly) (interchain with G-Cter in SUMO) linkage. Position 225 is a phosphoserine (S225). Polar residues predominate over residues 230 to 239; that stretch reads YAESETTDSV. The segment at 230 to 253 is disordered; sequence YAESETTDSVASDEENAEGRPHWR. K260 participates in a covalent cross-link: Glycyl lysine isopeptide (Lys-Gly) (interchain with G-Cter in SUMO2). Residue K293 forms a Glycyl lysine isopeptide (Lys-Gly) (interchain with G-Cter in SUMO) linkage. The segment at 303–349 is disordered; sequence SSWPPFTDLPLPAPVTPTPSSSRPDRETRASVIKKTSDITQARVKSC.

This sequence belongs to the IRF family. Interacts with BRD7, IRF2BP1 and IRF2BP2. Interacts with CREBBP in growing cells; the interaction acetylates IRF2 and regulates IRF2-dependent H4 promoter activity. Post-translationally, acetylated by CBP/ p300 during cell-growth. Acetylation on Lys-75 is required for stimulation of H4 promoter activity. In terms of processing, the major sites of sumoylation are Lys-137 and Lys-293. Sumoylation with SUMO1 increases its transcriptional repressor activity on IRF1 and diminishes its ability to activate ISRE and H4 promoter.

It is found in the nucleus. In terms of biological role, specifically binds to the upstream regulatory region of type I IFN and IFN-inducible MHC class I genes (the interferon consensus sequence (ICS)) and represses those genes. Also acts as an activator for several genes including H4 and IL7. Constitutively binds to the ISRE promoter to activate IL7. Involved in cell cycle regulation through binding the site II (HiNF-M) promoter region of H4 and activating transcription during cell growth. Antagonizes IRF1 transcriptional activation. The chain is Interferon regulatory factor 2 (Irf2) from Mus musculus (Mouse).